Here is a 57-residue protein sequence, read N- to C-terminus: Large ribosomal subunit protein bL32 (57 aa).

Over residues 1–19 (MAVPKRRMSRANTRSRRAQ) the composition is skewed to basic residues. Residues 1-20 (MAVPKRRMSRANTRSRRAQW) form a disordered region.

Belongs to the bacterial ribosomal protein bL32 family.

This is Large ribosomal subunit protein bL32 from Mycolicibacterium smegmatis (strain ATCC 700084 / mc(2)155) (Mycobacterium smegmatis).